The following is a 40-amino-acid chain: Photosystem II reaction center protein L (40 aa).

A helical membrane pass occupies residues serine 19–phenylalanine 39.

This sequence belongs to the PsbL family. PSII is composed of 1 copy each of membrane proteins PsbA, PsbB, PsbC, PsbD, PsbE, PsbF, PsbH, PsbI, PsbJ, PsbK, PsbL, PsbM, PsbT, PsbX, PsbY, PsbZ, Psb30/Ycf12, peripheral proteins PsbO, CyanoQ (PsbQ), PsbU, PsbV and a large number of cofactors. It forms dimeric complexes.

It is found in the cellular thylakoid membrane. Its function is as follows. One of the components of the core complex of photosystem II (PSII). PSII is a light-driven water:plastoquinone oxidoreductase that uses light energy to abstract electrons from H(2)O, generating O(2) and a proton gradient subsequently used for ATP formation. It consists of a core antenna complex that captures photons, and an electron transfer chain that converts photonic excitation into a charge separation. This subunit is found at the monomer-monomer interface and is required for correct PSII assembly and/or dimerization. This is Photosystem II reaction center protein L from Synechococcus elongatus (strain ATCC 33912 / PCC 7942 / FACHB-805) (Anacystis nidulans R2).